Here is a 664-residue protein sequence, read N- to C-terminus: Phosphomethylpyrimidine synthase (664 aa).

2 stretches are compositionally biased toward polar residues: residues 1-10 (MSTEPLSINP) and 17-27 (SATQEPSTSSK). Positions 1–37 (MSTEPLSINPLSAKPLSATQEPSTSSKPSRREQRAAA) are disordered. Substrate-binding positions include Asn-261, Met-290, Tyr-319, His-355, 375–377 (SRG), 416–419 (DGLR), and Glu-455. His-459 contributes to the Zn(2+) binding site. Residue Tyr-482 coordinates substrate. Zn(2+) is bound at residue His-523. The [4Fe-4S] cluster site is built by Cys-603, Cys-606, and Cys-611.

This sequence belongs to the ThiC family. As to quaternary structure, homodimer. [4Fe-4S] cluster is required as a cofactor.

It catalyses the reaction 5-amino-1-(5-phospho-beta-D-ribosyl)imidazole + S-adenosyl-L-methionine = 4-amino-2-methyl-5-(phosphooxymethyl)pyrimidine + CO + 5'-deoxyadenosine + formate + L-methionine + 3 H(+). Its pathway is cofactor biosynthesis; thiamine diphosphate biosynthesis. Functionally, catalyzes the synthesis of the hydroxymethylpyrimidine phosphate (HMP-P) moiety of thiamine from aminoimidazole ribotide (AIR) in a radical S-adenosyl-L-methionine (SAM)-dependent reaction. The protein is Phosphomethylpyrimidine synthase of Pectobacterium atrosepticum (strain SCRI 1043 / ATCC BAA-672) (Erwinia carotovora subsp. atroseptica).